A 229-amino-acid polypeptide reads, in one-letter code: Rhamnosyl O-methyltransferase (229 aa).

Positions 1–23 are cleaved as a signal peptide; it reads MERVRQMFSCVSGMIYRPTDSIA.

This sequence belongs to the rhamnosyl O-methyltransferase family.

Its function is as follows. Catalyzes the O-methylation of the hydroxyl group located on C-2 of the first rhamnosyl residue linked to the phenolic group of glycosylated phenolphthiocerol dimycocerosates (PGL) and p-hydroxybenzoic acid derivatives (p-HBAD). This chain is Rhamnosyl O-methyltransferase, found in Mycobacterium leprae (strain TN).